Consider the following 303-residue polypeptide: Methionyl-tRNA formyltransferase (303 aa).

Residue 108–111 participates in (6S)-5,6,7,8-tetrahydrofolate binding; the sequence is SDLP.

The protein belongs to the Fmt family.

It catalyses the reaction L-methionyl-tRNA(fMet) + (6R)-10-formyltetrahydrofolate = N-formyl-L-methionyl-tRNA(fMet) + (6S)-5,6,7,8-tetrahydrofolate + H(+). Functionally, attaches a formyl group to the free amino group of methionyl-tRNA(fMet). The formyl group appears to play a dual role in the initiator identity of N-formylmethionyl-tRNA by promoting its recognition by IF2 and preventing the misappropriation of this tRNA by the elongation apparatus. This chain is Methionyl-tRNA formyltransferase, found in Rickettsia rickettsii (strain Iowa).